Reading from the N-terminus, the 346-residue chain is uncharacterized protein (346 aa).

This is an uncharacterized protein from Mycoplasma pneumoniae (strain ATCC 29342 / M129 / Subtype 1) (Mycoplasmoides pneumoniae).